We begin with the raw amino-acid sequence, 815 residues long: Phosphatidylinositol 4-phosphate 5-kinase 9 (815 aa).

MORN repeat units follow at residues 58–80 (YSGS…DGCV), 81–103 (YDGE…SGAS), 104–126 (YDGE…NKLT), 127–149 (YKGR…NGDV), 150–172 (FEGS…NKNV), 173–195 (YLGD…TGDS), 196–218 (YEGS…DGGC), and 219–240 (YVGT…AGTR). One can recognise a PIPK domain in the interval 391-809 (GHRSYDLMLS…RFLEFIKKVF (419 aa)). Residues 769–790 (YNMTKKIEHAYKSLHFDSLSIS) form an activation loop region.

Interacts with CINV1. As to expression, widely expressed.

It localises to the membrane. The protein localises to the nucleus. It catalyses the reaction a 1,2-diacyl-sn-glycero-3-phospho-(1D-myo-inositol 4-phosphate) + ATP = a 1,2-diacyl-sn-glycero-3-phospho-(1D-myo-inositol-4,5-bisphosphate) + ADP + H(+). Plays a role in sugar-mediated root development. Interaction with CINV1 induces repression of CINV1 activity and negative regulation of sugar-mediated root cell elongation. In Arabidopsis thaliana (Mouse-ear cress), this protein is Phosphatidylinositol 4-phosphate 5-kinase 9 (PIP5K9).